The chain runs to 34 residues: Sperm protein EM1 (34 aa).

Basic residues predominate over residues 1–17 (AGSKSRSRSRSRSRSKS). A disordered region spans residues 1 to 34 (AGSKSRSRSRSRSRSKSPAKSASPKSAASPRASR). A run of 7 repeats spans residues 3 to 4 (SK), 5 to 6 (SR), 7 to 8 (SR), 9 to 10 (SR), 11 to 12 (SR), 13 to 14 (SR), and 15 to 16 (SK). A 7 X 2 AA tandem repeats of S-[KR] region spans residues 3 to 16 (SKSRSRSRSRSRSK). Over residues 18-34 (PAKSASPKSAASPRASR) the composition is skewed to low complexity.

In terms of tissue distribution, sperm.

It localises to the nucleus. The chain is Sperm protein EM1 from Ensis minor (Razor shell).